The chain runs to 216 residues: Glutathione S-transferase 1, isoform B (216 aa).

The GST N-terminal domain occupies Met1 to Cys80. Glutathione-binding positions include Ser9, His50–Val52, and Glu64–Arg66. The 122-residue stretch at Asp89–Phe210 folds into the GST C-terminal domain.

The protein belongs to the GST superfamily. Theta family. Homodimer.

The enzyme catalyses RX + glutathione = an S-substituted glutathione + a halide anion + H(+). Conjugation of reduced glutathione to a wide number of exogenous and endogenous hydrophobic electrophiles. This is Glutathione S-transferase 1, isoform B from Anopheles gambiae (African malaria mosquito).